The primary structure comprises 67 residues: LPS-assembly lipoprotein LptM (67 aa).

The first 19 residues, 1 to 19 (MKNVFKALTVLLTLFSLTG), serve as a signal peptide directing secretion. Cys20 carries N-palmitoyl cysteine lipidation. Cys20 is lipidated: S-diacylglycerol cysteine. Residues 26 to 67 (LYFPPADKNAPPPTKPVETQTQSTVPDKNDRATGDGPSQVNY) form a disordered region. The segment covering 42–51 (VETQTQSTVP) has biased composition (polar residues).

It belongs to the LptM family. Interacts with the outer membrane embedded portion of the LPS translocon formed by LptD and LptE (LptDE).

The protein resides in the cell outer membrane. Component of the lipopolysaccharide (LPS) transport (Lpt) pathway that promotes efficient assembly of the outer membrane LPS translocon (LptDE) by the BAM complex. Facilitates oxidative maturation of LptD by stabilizing a conformation of the LPS translocon in which LptD can efficiently acquire native disulfide bonds, thereby activating the LPS translocon. This Escherichia coli O157:H7 protein is LPS-assembly lipoprotein LptM.